Here is a 179-residue protein sequence, read N- to C-terminus: MATIRIHDEQNTSIENQEEVEQFLKRQEVIYEKWDITKLPAGLKEKYDLTDEEKQEILDVFAAEIKDISERRGYKASDVISLSDQNPKLDELLKNFKQEHHHTDDEVRFIVSGHGIFAIEGKDGTFFDVLLNPGDLISVPENTRHYFTLQEDRKVVAVRIFVTTEGWVPIYEKENVNQS.

Residues His100, His102, Glu106, and His145 each coordinate Fe(2+). His100, His102, Glu106, and His145 together coordinate Ni(2+).

The protein belongs to the acireductone dioxygenase (ARD) family. In terms of assembly, monomer. Fe(2+) serves as cofactor. The cofactor is Ni(2+).

It catalyses the reaction 1,2-dihydroxy-5-(methylsulfanyl)pent-1-en-3-one + O2 = 3-(methylsulfanyl)propanoate + CO + formate + 2 H(+). The catalysed reaction is 1,2-dihydroxy-5-(methylsulfanyl)pent-1-en-3-one + O2 = 4-methylsulfanyl-2-oxobutanoate + formate + 2 H(+). The protein operates within amino-acid biosynthesis; L-methionine biosynthesis via salvage pathway; L-methionine from S-methyl-5-thio-alpha-D-ribose 1-phosphate: step 5/6. In terms of biological role, catalyzes 2 different reactions between oxygen and the acireductone 1,2-dihydroxy-3-keto-5-methylthiopentene (DHK-MTPene) depending upon the metal bound in the active site. Fe-containing acireductone dioxygenase (Fe-ARD) produces formate and 2-keto-4-methylthiobutyrate (KMTB), the alpha-ketoacid precursor of methionine in the methionine recycle pathway. Ni-containing acireductone dioxygenase (Ni-ARD) produces methylthiopropionate, carbon monoxide and formate, and does not lie on the methionine recycle pathway. The sequence is that of Acireductone dioxygenase from Bacillus licheniformis (strain ATCC 14580 / DSM 13 / JCM 2505 / CCUG 7422 / NBRC 12200 / NCIMB 9375 / NCTC 10341 / NRRL NRS-1264 / Gibson 46).